The sequence spans 379 residues: Acetylajmalan esterase 1 (379 aa).

Positions methionine 1–glycine 20 are cleaved as a signal peptide. The active-site Nucleophile is the serine 34. Asparagine 96, asparagine 178, asparagine 197, and asparagine 291 each carry an N-linked (GlcNAc...) asparagine glycan. Active-site residues include aspartate 332 and histidine 335.

It belongs to the 'GDSL' lipolytic enzyme family. As to expression, expressed in roots and leaves at low levels.

It carries out the reaction 17-O-acetylnorajmaline + H2O = norajmaline + acetate + H(+). It catalyses the reaction 17-O-acetylajmaline + H2O = ajmaline + acetate + H(+). It functions in the pathway alkaloid biosynthesis; ajmaline biosynthesis. Acetylesterase involved in the biosynthesis of ajmaline-type monoterpenoid indole alkaloids (MIAs) natural products, important plant-derived pharmaceuticals used in the therapy of heart disorders. Deacetylates 17-O-acetylnorajmaline to produce norajmaline. May also catalyze the conversion of 17-O-acetylajmaline to ajmaline. This chain is Acetylajmalan esterase 1, found in Rauvolfia serpentina (Serpentine wood).